The following is a 133-amino-acid chain: ATP synthase epsilon chain, chloroplastic (133 aa).

It belongs to the ATPase epsilon chain family. As to quaternary structure, F-type ATPases have 2 components, CF(1) - the catalytic core - and CF(0) - the membrane proton channel. CF(1) has five subunits: alpha(3), beta(3), gamma(1), delta(1), epsilon(1). CF(0) has three main subunits: a, b and c.

It localises to the plastid. The protein localises to the chloroplast thylakoid membrane. In terms of biological role, produces ATP from ADP in the presence of a proton gradient across the membrane. The sequence is that of ATP synthase epsilon chain, chloroplastic from Trieres chinensis (Marine centric diatom).